The primary structure comprises 383 residues: Cytochrome b (383 aa).

The next 4 membrane-spanning stretches (helical) occupy residues 32–52 (VGSL…FLAM), 76–98 (WLMR…LHMG), 113–133 (VWSM…MGYC), and 179–199 (FFAL…MHFM). Heme b-binding residues include histidine 82 and histidine 96. Positions 183 and 197 each coordinate heme b. Histidine 202 contacts a ubiquinone. 4 consecutive transmembrane segments (helical) span residues 225–245 (FVFK…LFVF), 289–309 (LGGV…PMTD), 321–341 (LSKL…NMGQ), and 348–368 (FIEL…MLVP).

Belongs to the cytochrome b family. Fungal cytochrome b-c1 complex contains 10 subunits; 3 respiratory subunits, 2 core proteins and 5 low-molecular weight proteins. Cytochrome b-c1 complex is a homodimer. Requires heme b as cofactor.

The protein resides in the mitochondrion inner membrane. In terms of biological role, component of the ubiquinol-cytochrome c reductase complex (complex III or cytochrome b-c1 complex) that is part of the mitochondrial respiratory chain. The b-c1 complex mediates electron transfer from ubiquinol to cytochrome c. Contributes to the generation of a proton gradient across the mitochondrial membrane that is then used for ATP synthesis. The chain is Cytochrome b (COB) from Debaryomyces hansenii (strain ATCC 36239 / CBS 767 / BCRC 21394 / JCM 1990 / NBRC 0083 / IGC 2968) (Yeast).